We begin with the raw amino-acid sequence, 258 residues long: Imidazole glycerol phosphate synthase subunit HisF (258 aa).

Active-site residues include Asp-11 and Asp-130.

The protein belongs to the HisA/HisF family. In terms of assembly, heterodimer of HisH and HisF.

Its subcellular location is the cytoplasm. It carries out the reaction 5-[(5-phospho-1-deoxy-D-ribulos-1-ylimino)methylamino]-1-(5-phospho-beta-D-ribosyl)imidazole-4-carboxamide + L-glutamine = D-erythro-1-(imidazol-4-yl)glycerol 3-phosphate + 5-amino-1-(5-phospho-beta-D-ribosyl)imidazole-4-carboxamide + L-glutamate + H(+). Its pathway is amino-acid biosynthesis; L-histidine biosynthesis; L-histidine from 5-phospho-alpha-D-ribose 1-diphosphate: step 5/9. Its function is as follows. IGPS catalyzes the conversion of PRFAR and glutamine to IGP, AICAR and glutamate. The HisF subunit catalyzes the cyclization activity that produces IGP and AICAR from PRFAR using the ammonia provided by the HisH subunit. This is Imidazole glycerol phosphate synthase subunit HisF from Methylorubrum populi (strain ATCC BAA-705 / NCIMB 13946 / BJ001) (Methylobacterium populi).